Reading from the N-terminus, the 381-residue chain is Acetyl-CoA:oxalate CoA-transferase (381 aa).

Histidine 233 is an active-site residue.

It belongs to the CoA-transferase III family. In terms of assembly, homodimer.

The enzyme catalyses oxalate + acetyl-CoA = oxalyl-CoA + acetate. Functionally, involved in the catabolism of oxalate and in the adapatation to low pH. ACOCT serves to prime the oxalate-induced acid tolerance response (ATR) cycle by producing substrate for oxalyl-CoA decarboxylase (OXC) and formyl-coenzyme A transferase (FCOCT). Catalyzes the reversible conversion of acetyl-CoA and oxalate to oxalyl-CoA and acetate. It can also use formyl-CoA and oxalate to produce oxalyl-CoA and formate with significantly reduced specific activity. The polypeptide is Acetyl-CoA:oxalate CoA-transferase (yfdE) (Escherichia coli (strain K12)).